A 530-amino-acid polypeptide reads, in one-letter code: Berberine bridge enzyme-like 22 (530 aa).

The signal sequence occupies residues 1 to 22 (MRELFMYLFLLFLVLCVKSVYS). Cysteine 32 and cysteine 99 are oxidised to a cystine. Asparagine 39, asparagine 47, asparagine 68, asparagine 75, asparagine 141, and asparagine 486 each carry an N-linked (GlcNAc...) asparagine glycan. The 175-residue stretch at 77–251 (TSLKPILIVK…LSWKVKLARV (175 aa)) folds into the FAD-binding PCMH-type domain. Positions 114 to 176 (HDYEGLSYLS…KIHAFAAGIC (63 aa)) form a cross-link, 6-(S-cysteinyl)-8alpha-(pros-histidyl)-FAD (His-Cys).

Belongs to the oxygen-dependent FAD-linked oxidoreductase family. FAD serves as cofactor. The FAD cofactor is bound via a bicovalent 6-S-cysteinyl, 8alpha-N1-histidyl FAD linkage. In terms of tissue distribution, accumulates in cell walls of etiolated hypocotyls.

Its subcellular location is the secreted. It is found in the cell wall. The protein is Berberine bridge enzyme-like 22 of Arabidopsis thaliana (Mouse-ear cress).